Here is a 145-residue protein sequence, read N- to C-terminus: Bacilliredoxin BH2759 (145 aa).

This sequence belongs to the bacilliredoxin family.

This is Bacilliredoxin BH2759 from Halalkalibacterium halodurans (strain ATCC BAA-125 / DSM 18197 / FERM 7344 / JCM 9153 / C-125) (Bacillus halodurans).